A 402-amino-acid polypeptide reads, in one-letter code: LIM/homeobox protein Lhx5 (402 aa).

2 LIM zinc-binding domains span residues 3–61 and 62–125; these read VHCA…RRFG and TKCA…SSSL. Residues 124-148 are compositionally biased toward low complexity; sequence SLKEGSLNSVSSCTDRSLSPDLQDP. Disordered stretches follow at residues 124–186 and 298–402; these read SLKE…PRTT and HGPP…AAVW. Positions 151–167 are enriched in basic and acidic residues; it reads DDPKETDNSTSSDKETA. Positions 180–239 form a DNA-binding region, homeobox; that stretch reads RRGPRTTIKAKQLETLKAAFAATPKPTRHIREQLAQETGLNMRVIQVWFQNRRSKERRMK. 2 stretches are compositionally biased toward low complexity: residues 300 to 311 and 322 to 336; these read PPSQAQSPADSS and PLGA…PHGA.

The protein localises to the nucleus. Plays an essential role in the regulation of neuronal differentiation and migration during development of the central nervous system. This Mus musculus (Mouse) protein is LIM/homeobox protein Lhx5 (Lhx5).